We begin with the raw amino-acid sequence, 336 residues long: Ketol-acid reductoisomerase (NADP(+)) (336 aa).

In terms of domain architecture, KARI N-terminal Rossmann spans Ala-2 to Thr-181. NADP(+)-binding positions include Tyr-25 to Gln-28, Arg-48, Ser-52, and Asp-82 to Gln-85. The active site involves His-107. Gly-133 provides a ligand contact to NADP(+). The KARI C-terminal knotted domain maps to Thr-182 to Val-327. Residues Asp-190, Glu-194, Glu-226, and Glu-230 each contribute to the Mg(2+) site. Residue Ser-251 coordinates substrate.

Belongs to the ketol-acid reductoisomerase family. Requires Mg(2+) as cofactor.

It carries out the reaction (2R)-2,3-dihydroxy-3-methylbutanoate + NADP(+) = (2S)-2-acetolactate + NADPH + H(+). It catalyses the reaction (2R,3R)-2,3-dihydroxy-3-methylpentanoate + NADP(+) = (S)-2-ethyl-2-hydroxy-3-oxobutanoate + NADPH + H(+). It functions in the pathway amino-acid biosynthesis; L-isoleucine biosynthesis; L-isoleucine from 2-oxobutanoate: step 2/4. Its pathway is amino-acid biosynthesis; L-valine biosynthesis; L-valine from pyruvate: step 2/4. Its function is as follows. Involved in the biosynthesis of branched-chain amino acids (BCAA). Catalyzes an alkyl-migration followed by a ketol-acid reduction of (S)-2-acetolactate (S2AL) to yield (R)-2,3-dihydroxy-isovalerate. In the isomerase reaction, S2AL is rearranged via a Mg-dependent methyl migration to produce 3-hydroxy-3-methyl-2-ketobutyrate (HMKB). In the reductase reaction, this 2-ketoacid undergoes a metal-dependent reduction by NADPH to yield (R)-2,3-dihydroxy-isovalerate. The sequence is that of Ketol-acid reductoisomerase (NADP(+)) from Bacillus cytotoxicus (strain DSM 22905 / CIP 110041 / 391-98 / NVH 391-98).